A 362-amino-acid chain; its full sequence is Molybdopterin synthase catalytic subunit (362 aa).

Substrate is bound by residues 101 to 102 (HR), Lys-117, and 124 to 126 (KKE).

The protein belongs to the MoaE family. MOCS2B subfamily. Heterotetramer; composed of 2 small (Mocs2A) and 2 large (Mocs2B) subunits.

Its subcellular location is the cytoplasm. The catalysed reaction is 2 [molybdopterin-synthase sulfur-carrier protein]-C-terminal-Gly-aminoethanethioate + cyclic pyranopterin phosphate + H2O = molybdopterin + 2 [molybdopterin-synthase sulfur-carrier protein]-C-terminal Gly-Gly + 2 H(+). The protein operates within cofactor biosynthesis; molybdopterin biosynthesis. Catalytic subunit of the molybdopterin synthase complex, a complex that catalyzes the conversion of precursor Z into molybdopterin. Acts by mediating the incorporation of 2 sulfur atoms from thiocarboxylated Mocs2A into precursor Z to generate a dithiolene group. The sequence is that of Molybdopterin synthase catalytic subunit from Drosophila grimshawi (Hawaiian fruit fly).